The primary structure comprises 174 residues: Auxin-responsive protein IAA2 (174 aa).

An EAR-like (transcriptional repression) motif is present at residues 16–20 (LCLGL). A disordered region spans residues 44 to 67 (FEETRDEEESTPPTKTQIVGWPPV). One can recognise a PB1 domain in the interval 77 to 164 (VSYVKVSMDG…SCKRLRIMKG (88 aa)).

This sequence belongs to the Aux/IAA family. Homodimers and heterodimers. Interacts with the auxin-responsive protein IAA1. Interacts with TPL. As to expression, preferentially expressed in vegetative organs.

Its subcellular location is the nucleus. Aux/IAA proteins are short-lived transcriptional factors that function as repressors of early auxin response genes at low auxin concentrations. Repression is thought to result from the interaction with auxin response factors (ARFs), proteins that bind to the auxin-responsive promoter element (AuxRE). Formation of heterodimers with ARF proteins may alter their ability to modulate early auxin response genes expression. In Arabidopsis thaliana (Mouse-ear cress), this protein is Auxin-responsive protein IAA2 (IAA2).